The primary structure comprises 288 residues: 4-hydroxy-tetrahydrodipicolinate synthase (288 aa).

Threonine 47 is a pyruvate binding site. The active-site Proton donor/acceptor is the tyrosine 136. The Schiff-base intermediate with substrate role is filled by lysine 164. Position 204 (isoleucine 204) interacts with pyruvate.

Belongs to the DapA family. Homotetramer; dimer of dimers.

It localises to the cytoplasm. The enzyme catalyses L-aspartate 4-semialdehyde + pyruvate = (2S,4S)-4-hydroxy-2,3,4,5-tetrahydrodipicolinate + H2O + H(+). It functions in the pathway amino-acid biosynthesis; L-lysine biosynthesis via DAP pathway; (S)-tetrahydrodipicolinate from L-aspartate: step 3/4. Catalyzes the condensation of (S)-aspartate-beta-semialdehyde [(S)-ASA] and pyruvate to 4-hydroxy-tetrahydrodipicolinate (HTPA). This Leuconostoc mesenteroides subsp. mesenteroides (strain ATCC 8293 / DSM 20343 / BCRC 11652 / CCM 1803 / JCM 6124 / NCDO 523 / NBRC 100496 / NCIMB 8023 / NCTC 12954 / NRRL B-1118 / 37Y) protein is 4-hydroxy-tetrahydrodipicolinate synthase.